The chain runs to 158 residues: Transcription elongation factor GreA (158 aa).

It belongs to the GreA/GreB family.

Necessary for efficient RNA polymerase transcription elongation past template-encoded arresting sites. The arresting sites in DNA have the property of trapping a certain fraction of elongating RNA polymerases that pass through, resulting in locked ternary complexes. Cleavage of the nascent transcript by cleavage factors such as GreA or GreB allows the resumption of elongation from the new 3'terminus. GreA releases sequences of 2 to 3 nucleotides. This chain is Transcription elongation factor GreA, found in Ruthia magnifica subsp. Calyptogena magnifica.